The chain runs to 164 residues: Protein-export protein SecB (164 aa).

Belongs to the SecB family. As to quaternary structure, homotetramer, a dimer of dimers. One homotetramer interacts with 1 SecA dimer.

Its subcellular location is the cytoplasm. Functionally, one of the proteins required for the normal export of preproteins out of the cell cytoplasm. It is a molecular chaperone that binds to a subset of precursor proteins, maintaining them in a translocation-competent state. It also specifically binds to its receptor SecA. This is Protein-export protein SecB from Ruegeria sp. (strain TM1040) (Silicibacter sp.).